A 437-amino-acid polypeptide reads, in one-letter code: Methylenetetrahydrofolate--tRNA-(uracil-5-)-methyltransferase TrmFO (437 aa).

10–15 lines the FAD pocket; that stretch reads GAGLAG.

It belongs to the MnmG family. TrmFO subfamily. The cofactor is FAD.

It is found in the cytoplasm. The catalysed reaction is uridine(54) in tRNA + (6R)-5,10-methylene-5,6,7,8-tetrahydrofolate + NADH + H(+) = 5-methyluridine(54) in tRNA + (6S)-5,6,7,8-tetrahydrofolate + NAD(+). The enzyme catalyses uridine(54) in tRNA + (6R)-5,10-methylene-5,6,7,8-tetrahydrofolate + NADPH + H(+) = 5-methyluridine(54) in tRNA + (6S)-5,6,7,8-tetrahydrofolate + NADP(+). In terms of biological role, catalyzes the folate-dependent formation of 5-methyl-uridine at position 54 (M-5-U54) in all tRNAs. This is Methylenetetrahydrofolate--tRNA-(uracil-5-)-methyltransferase TrmFO from Brevibacillus brevis (strain 47 / JCM 6285 / NBRC 100599).